Consider the following 373-residue polypeptide: SH3 domain-binding protein 5-like (373 aa).

The interval 1–36 (MEGKEGPPCEVRLPTPGAEREGPVHPELGAFGESAS) is disordered. Coiled-coil stretches lie at residues 35–98 (ASDA…ESAR) and 170–258 (WQEM…KLRY). Disordered stretches follow at residues 274–308 (ARRT…PADT) and 332–373 (DLTD…SVSL). Over residues 332–360 (DLTDVTSLDGRETGAVESGGSRERGEDRG) the composition is skewed to basic and acidic residues.

This sequence belongs to the SH3BP5 family.

Functionally, functions as a guanine nucleotide exchange factor (GEF) for rab11a. In Xenopus laevis (African clawed frog), this protein is SH3 domain-binding protein 5-like (sh3bp5l).